The chain runs to 453 residues: Na(+)/H(+) antiporter NhaA (453 aa).

11 helical membrane passes run 28–48 (FLHI…AALI), 79–99 (LHFL…GMEI), 115–135 (ALPL…YFIL), 144–164 (GWAV…ALLG), 173–193 (VFLL…IAVF), 196–216 (GGMD…VLGM), 241–261 (TGAH…VFAP), 321–341 (VAFG…LDGI), 355–375 (VLIA…FLMV), 393–413 (LVGL…TLAF), and 424–444 (LGIL…GFFQ).

This sequence belongs to the NhaA Na(+)/H(+) (TC 2.A.33) antiporter family.

It localises to the cell inner membrane. The catalysed reaction is Na(+)(in) + 2 H(+)(out) = Na(+)(out) + 2 H(+)(in). Na(+)/H(+) antiporter that extrudes sodium in exchange for external protons. This is Na(+)/H(+) antiporter NhaA from Janthinobacterium sp. (strain Marseille) (Minibacterium massiliensis).